The chain runs to 129 residues: Glycine cleavage system H protein (129 aa).

Positions 24-106 (IAVIGITAYA…YGDGWLIKVR (83 aa)) constitute a Lipoyl-binding domain. Lys-65 is modified (N6-lipoyllysine).

Belongs to the GcvH family. The glycine cleavage system is composed of four proteins: P, T, L and H. The cofactor is (R)-lipoate.

The glycine cleavage system catalyzes the degradation of glycine. The H protein shuttles the methylamine group of glycine from the P protein to the T protein. This chain is Glycine cleavage system H protein, found in Synechococcus sp. (strain JA-2-3B'a(2-13)) (Cyanobacteria bacterium Yellowstone B-Prime).